A 264-amino-acid polypeptide reads, in one-letter code: Undecaprenyl-diphosphatase (264 aa).

8 helical membrane-spanning segments follow: residues M1 to I21, Q39 to F59, S83 to F103, S113 to K133, V143 to V163, V181 to L201, L220 to I240, and S244 to V264.

Belongs to the UppP family.

The protein resides in the cell inner membrane. It carries out the reaction di-trans,octa-cis-undecaprenyl diphosphate + H2O = di-trans,octa-cis-undecaprenyl phosphate + phosphate + H(+). Catalyzes the dephosphorylation of undecaprenyl diphosphate (UPP). Confers resistance to bacitracin. The protein is Undecaprenyl-diphosphatase of Campylobacter curvus (strain 525.92).